The following is a 347-amino-acid chain: Protein-arginine kinase (347 aa).

A Phosphagen kinase C-terminal domain is found at 22 to 247 (LVVSTRIRLA…EQVIQAERHA (226 aa)). ATP contacts are provided by residues 25 to 29 (STRIR), H85, R118, 169 to 173 (RASVM), and 200 to 205 (RGRYGE). An RDXXRA motif of the pArg binding pocket involved in allosteric regulation motif is present at residues 330–335 (RDRERA).

Belongs to the ATP:guanido phosphotransferase family.

The enzyme catalyses L-arginyl-[protein] + ATP = N(omega)-phospho-L-arginyl-[protein] + ADP + H(+). Appears to be allosterically activated by the binding of pArg-containing polypeptides to the pArg-binding pocket localized in the C-terminal domain of McsB. Catalyzes the specific phosphorylation of arginine residues in proteins. In Exiguobacterium sp. (strain ATCC BAA-1283 / AT1b), this protein is Protein-arginine kinase.